We begin with the raw amino-acid sequence, 387 residues long: Early growth response protein 3 (387 aa).

The disordered stretch occupies residues 241–283; it reads PGFGSLPQPPLTLKPIRPRKYPNRPSKTPLHERPHACPAEGCD. The segment covering 269-283 has biased composition (basic and acidic residues); sequence PLHERPHACPAEGCD. C2H2-type zinc fingers lie at residues 275-299, 305-327, and 333-355; these read HACP…LRIH, FQCR…IRTH, and FACE…AKIH. Residues 348–387 are disordered; sequence RKRHAKIHLKQKEKKAEKGGAPSASSAPPVSLAPVVTTCA. Residues 350-360 show a composition bias toward basic residues; the sequence is RHAKIHLKQKE. Residues 368–387 are compositionally biased toward low complexity; that stretch reads APSASSAPPVSLAPVVTTCA.

It belongs to the EGR C2H2-type zinc-finger protein family.

It localises to the nucleus. Its function is as follows. Probable transcription factor involved in muscle spindle development. This is Early growth response protein 3 (EGR3) from Homo sapiens (Human).